The primary structure comprises 67 residues: Bowman-Birk type major trypsin inhibitor (67 aa).

5 cysteine pairs are disulfide-bonded: C8/C63, C9/C24, C14/C22, C31/C38, and C35/C51.

The protein belongs to the Bowman-Birk serine protease inhibitor family.

This is Bowman-Birk type major trypsin inhibitor from Setaria italica (Foxtail millet).